Consider the following 177-residue polypeptide: Large ribosomal subunit protein uL6 (177 aa).

Residues 155-177 (EPYKGKGVKHADERIFRKEGKKK) are disordered.

The protein belongs to the universal ribosomal protein uL6 family. As to quaternary structure, part of the 50S ribosomal subunit.

Its function is as follows. This protein binds to the 23S rRNA, and is important in its secondary structure. It is located near the subunit interface in the base of the L7/L12 stalk, and near the tRNA binding site of the peptidyltransferase center. This is Large ribosomal subunit protein uL6 from Bartonella tribocorum (strain CIP 105476 / IBS 506).